Reading from the N-terminus, the 305-residue chain is Major fimbrium anchoring subunit FimB (305 aa).

An N-terminal signal peptide occupies residues 1–22 (MNDAKKYIVSVLILLVAGMFGG). Cysteine 23 carries N-palmitoyl cysteine lipidation. Cysteine 23 is lipidated: S-diacylglycerol cysteine.

This sequence belongs to the bacteroidetes fimbrillin superfamily. FimB/Mfa2 family. FimB is not part of the fimbrium itself, but anchors the fimbrium in the outer membrane. Linear, head-to-tail oligomerization of fimbrial subunits mediates assembly of the fimbrium stalk, while the minor components FimC, FimD and FimE probably form the fimbrium tip. The anchoring subunit FimB limits fimbrium length and is important for solid fimbrium attachment to the outer membrane. In its absence, the major fimbriae become very long and are easily detached from the membrane.

Its subcellular location is the cell outer membrane. Anchoring subunit of the major fimbriae. Regulates fimbrial length. These filamentous pili are attached to the cell surface; they mediate biofilm formation, adhesion onto host cells and onto other bacteria that are part of the oral microbiome. Fimbriae of P.gingivalis are major virulence factors. This is Major fimbrium anchoring subunit FimB from Porphyromonas gingivalis (Bacteroides gingivalis).